The following is a 438-amino-acid chain: tRNA modification GTPase MnmE (438 aa).

Positions 20, 79, and 119 each coordinate (6S)-5-formyl-5,6,7,8-tetrahydrofolate. Positions 215 to 360 (GVEVAIVGPP…LEAALAARVG (146 aa)) constitute a TrmE-type G domain. GTP is bound by residues 225-230 (NAGKSS), 244-250 (SDEAGTT), and 269-272 (DTAG). Positions 229 and 250 each coordinate Mg(2+). Lys-438 is a binding site for (6S)-5-formyl-5,6,7,8-tetrahydrofolate.

It belongs to the TRAFAC class TrmE-Era-EngA-EngB-Septin-like GTPase superfamily. TrmE GTPase family. In terms of assembly, homodimer. Heterotetramer of two MnmE and two MnmG subunits. Requires K(+) as cofactor.

Its subcellular location is the cytoplasm. Its function is as follows. Exhibits a very high intrinsic GTPase hydrolysis rate. Involved in the addition of a carboxymethylaminomethyl (cmnm) group at the wobble position (U34) of certain tRNAs, forming tRNA-cmnm(5)s(2)U34. This Parvibaculum lavamentivorans (strain DS-1 / DSM 13023 / NCIMB 13966) protein is tRNA modification GTPase MnmE.